A 96-amino-acid polypeptide reads, in one-letter code: DNA-directed RNA polymerase subunit Rpo11 (96 aa).

It belongs to the archaeal Rpo11/eukaryotic RPB11/RPC19 RNA polymerase subunit family. In terms of assembly, part of the RNA polymerase complex.

It is found in the cytoplasm. The catalysed reaction is RNA(n) + a ribonucleoside 5'-triphosphate = RNA(n+1) + diphosphate. In terms of biological role, DNA-dependent RNA polymerase (RNAP) catalyzes the transcription of DNA into RNA using the four ribonucleoside triphosphates as substrates. This Haloquadratum walsbyi (strain DSM 16790 / HBSQ001) protein is DNA-directed RNA polymerase subunit Rpo11.